A 440-amino-acid polypeptide reads, in one-letter code: tRNA-2-methylthio-N(6)-dimethylallyladenosine synthase (440 aa).

The 117-residue stretch at 2–118 folds into the MTTase N-terminal domain; the sequence is PKYYIITYGC…LPKILESLDG (117 aa). The [4Fe-4S] cluster site is built by C11, C47, C81, C155, C159, and C162. A Radical SAM core domain is found at 141-370; that stretch reads RENKFQAWIP…ENLQRKIIYE (230 aa). The TRAM domain occupies 373-436; the sequence is LSRVGKEEIV…LWSLKGEVIR (64 aa).

Belongs to the methylthiotransferase family. MiaB subfamily. Monomer. Requires [4Fe-4S] cluster as cofactor.

Its subcellular location is the cytoplasm. It carries out the reaction N(6)-dimethylallyladenosine(37) in tRNA + (sulfur carrier)-SH + AH2 + 2 S-adenosyl-L-methionine = 2-methylsulfanyl-N(6)-dimethylallyladenosine(37) in tRNA + (sulfur carrier)-H + 5'-deoxyadenosine + L-methionine + A + S-adenosyl-L-homocysteine + 2 H(+). Functionally, catalyzes the methylthiolation of N6-(dimethylallyl)adenosine (i(6)A), leading to the formation of 2-methylthio-N6-(dimethylallyl)adenosine (ms(2)i(6)A) at position 37 in tRNAs that read codons beginning with uridine. This chain is tRNA-2-methylthio-N(6)-dimethylallyladenosine synthase, found in Dictyoglomus thermophilum (strain ATCC 35947 / DSM 3960 / H-6-12).